A 965-amino-acid chain; its full sequence is Probable serine/threonine-protein kinase DDB_G0291516 (965 aa).

Residues 114–170 are disordered; sequence KDSQKELLPSPQQLTPPTSLPSLPLLPLPQAPEQNEEQQLTQPPSPPSIPPPPPQKK. Low complexity-rich tracts occupy residues 119-136 and 144-155; these read ELLP…LPSL and APEQNEEQQLTQ. The segment covering 156–168 has biased composition (pro residues); that stretch reads PPSPPSIPPPPPQ. 2 ANK repeats span residues 271-301 and 310-339; these read KGET…HMGI and LNKN…PLKM. In terms of domain architecture, Protein kinase spans 459-739; sequence IDFHTQIGSA…NVKAIKKEFL (281 aa). Residues 465 to 473 and Lys486 contribute to the ATP site; that span reads IGSAGNASV. Asp587 (proton acceptor) is an active-site residue. A helical transmembrane segment spans residues 653-673; sequence IYSLGIILWELVCVAMTGTYI. N-linked (GlcNAc...) asparagine glycosylation is found at Asn760, Asn765, Asn905, Asn909, Asn910, Asn914, Asn934, and Asn938. Residues 881-940 are compositionally biased toward low complexity; the sequence is NINKNKNNNNNNNNNNNNNNNINNNNTFNNSTNNNSNDNINIPYDFNNNNNNNNNSCNNS. The segment at 881-942 is disordered; sequence NINKNKNNNN…NNNSCNNSKK (62 aa).

Belongs to the protein kinase superfamily. Ser/Thr protein kinase family.

It is found in the membrane. The enzyme catalyses L-seryl-[protein] + ATP = O-phospho-L-seryl-[protein] + ADP + H(+). It catalyses the reaction L-threonyl-[protein] + ATP = O-phospho-L-threonyl-[protein] + ADP + H(+). The protein is Probable serine/threonine-protein kinase DDB_G0291516 of Dictyostelium discoideum (Social amoeba).